The sequence spans 231 residues: PX domain-containing protein 1 (231 aa).

The PX domain occupies 1-134; it reads MASAVFEGTS…TFFERSPLDQ (134 aa).

The chain is PX domain-containing protein 1 (PXDC1) from Bos taurus (Bovine).